The chain runs to 304 residues: Aspartate carbamoyltransferase catalytic subunit (304 aa).

Carbamoyl phosphate contacts are provided by Arg-55 and Thr-56. Position 84 (Lys-84) interacts with L-aspartate. The carbamoyl phosphate site is built by Arg-105, His-133, and Gln-136. L-aspartate contacts are provided by Arg-165 and Arg-226. Carbamoyl phosphate-binding residues include Leu-265 and Pro-266.

The protein belongs to the aspartate/ornithine carbamoyltransferase superfamily. ATCase family. Heterooligomer of catalytic and regulatory chains.

The enzyme catalyses carbamoyl phosphate + L-aspartate = N-carbamoyl-L-aspartate + phosphate + H(+). It participates in pyrimidine metabolism; UMP biosynthesis via de novo pathway; (S)-dihydroorotate from bicarbonate: step 2/3. In terms of biological role, catalyzes the condensation of carbamoyl phosphate and aspartate to form carbamoyl aspartate and inorganic phosphate, the committed step in the de novo pyrimidine nucleotide biosynthesis pathway. This is Aspartate carbamoyltransferase catalytic subunit from Methanothrix thermoacetophila (strain DSM 6194 / JCM 14653 / NBRC 101360 / PT) (Methanosaeta thermophila).